Here is an 87-residue protein sequence, read N- to C-terminus: Small ribosomal subunit protein bS20 (87 aa).

The span at 1 to 27 (MANIKSAKKRALQSERRRQHNASRRSM) shows a compositional bias: basic residues. The segment at 1–31 (MANIKSAKKRALQSERRRQHNASRRSMTRTS) is disordered.

Belongs to the bacterial ribosomal protein bS20 family.

In terms of biological role, binds directly to 16S ribosomal RNA. This is Small ribosomal subunit protein bS20 from Pseudoalteromonas atlantica (strain T6c / ATCC BAA-1087).